The primary structure comprises 695 residues: Elongation factor G 1 (695 aa).

One can recognise a tr-type G domain in the interval 6–282; that stretch reads STFRNIGISA…AITYYLPDPT (277 aa). GTP-binding positions include 15–22, 82–86, and 136–139; these read AHIDSGKT, DTPGH, and NKCD.

The protein belongs to the TRAFAC class translation factor GTPase superfamily. Classic translation factor GTPase family. EF-G/EF-2 subfamily.

Its subcellular location is the cytoplasm. Its function is as follows. Catalyzes the GTP-dependent ribosomal translocation step during translation elongation. During this step, the ribosome changes from the pre-translocational (PRE) to the post-translocational (POST) state as the newly formed A-site-bound peptidyl-tRNA and P-site-bound deacylated tRNA move to the P and E sites, respectively. Catalyzes the coordinated movement of the two tRNA molecules, the mRNA and conformational changes in the ribosome. In Treponema pallidum (strain Nichols), this protein is Elongation factor G 1 (fusA).